Consider the following 23-residue polypeptide: Alpha-amanitin proprotein (23 aa).

(3R,4R)-4,5-dihydroxyisoleucine; in form alpha-amanitin is present on I1. Residue I1 is modified to (3R,4S)-4-hydroxyisoleucine; in form gamma-amanitin. Residues 1–8 constitute a cross-link (cyclopeptide (Ile-Pro)); it reads IWGIGCNP. Positions 2–6 form a cross-link, 2'-cysteinyl-6'-hydroxytryptophan sulfoxide (Trp-Cys); that stretch reads WGIGC. P8 is modified (4-hydroxyproline). The propeptide occupies 9–23; that stretch reads CVGDEVTALITRGEA.

The protein belongs to the MSDIN fungal toxin family. In terms of processing, processed by the macrocyclase-peptidase enzyme POPB to yield a toxic cyclic decapeptide. POPB first removes 10 residues from the N-terminus. Conformational trapping of the remaining peptide forces the enzyme to release this intermediate rather than proceed to macrocyclization. The enzyme rebinds the remaining peptide in a different conformation and catalyzes macrocyclization of the N-terminal 8 residues.

Its function is as follows. Major toxin belonging to the bicyclic octapeptides amatoxins that acts by binding non-competitively to RNA polymerase II and greatly slowing the elongation of transcripts from target promoters. The sequence is that of Alpha-amanitin proprotein from Amanita fuligineoides.